Consider the following 376-residue polypeptide: Actin, macronuclear (376 aa).

It belongs to the actin family.

It localises to the cytoplasm. Its subcellular location is the cytoskeleton. It carries out the reaction ATP + H2O = ADP + phosphate + H(+). Actins are highly conserved proteins that are involved in various types of cell motility and are ubiquitously expressed in all eukaryotic cells. In Tetrahymena thermophila, this protein is Actin, macronuclear.